A 362-amino-acid chain; its full sequence is 3-isopropylmalate dehydrogenase (362 aa).

78 to 91 serves as a coordination point for NAD(+); the sequence is GPKWETLPPDEQPE. Positions 99, 109, 138, and 227 each coordinate substrate. Residues aspartate 227, aspartate 251, and aspartate 255 each contribute to the Mg(2+) site. 285–297 is an NAD(+) binding site; sequence GSAPDIAGQGIAN.

This sequence belongs to the isocitrate and isopropylmalate dehydrogenases family. LeuB type 1 subfamily. Homodimer. Requires Mg(2+) as cofactor. The cofactor is Mn(2+).

Its subcellular location is the cytoplasm. The enzyme catalyses (2R,3S)-3-isopropylmalate + NAD(+) = 4-methyl-2-oxopentanoate + CO2 + NADH. It participates in amino-acid biosynthesis; L-leucine biosynthesis; L-leucine from 3-methyl-2-oxobutanoate: step 3/4. Functionally, catalyzes the oxidation of 3-carboxy-2-hydroxy-4-methylpentanoate (3-isopropylmalate) to 3-carboxy-4-methyl-2-oxopentanoate. The product decarboxylates to 4-methyl-2 oxopentanoate. This is 3-isopropylmalate dehydrogenase from Geobacter metallireducens (strain ATCC 53774 / DSM 7210 / GS-15).